A 99-amino-acid chain; its full sequence is RNA-binding protein Hfq (99 aa).

Positions 9–68 (DPFLNALRRERVPVSIYLVNGIKLQGQIESFDQFVILLKNTVSQMVYKHAISTVVPSRPV) constitute a Sm domain. Positions 64–99 (PSRPVSHHSNNPGGSNNYHGSNTTAQQQSQDADDAE) are disordered. Positions 70–93 (HHSNNPGGSNNYHGSNTTAQQQSQ) are enriched in low complexity.

It belongs to the Hfq family. In terms of assembly, homohexamer.

Functionally, RNA chaperone that binds small regulatory RNA (sRNAs) and mRNAs to facilitate mRNA translational regulation in response to envelope stress, environmental stress and changes in metabolite concentrations. Also binds with high specificity to tRNAs. The chain is RNA-binding protein Hfq from Pectobacterium atrosepticum (strain SCRI 1043 / ATCC BAA-672) (Erwinia carotovora subsp. atroseptica).